Here is a 442-residue protein sequence, read N- to C-terminus: Protein PRRC1-A (442 aa).

Positions 1–27 (MMEESGIETTPPSTPPPSTIGTSVPAA) are disordered.

This sequence belongs to the PRRC1 family.

Its subcellular location is the golgi apparatus. This chain is Protein PRRC1-A (prrc1-a), found in Xenopus laevis (African clawed frog).